An 89-amino-acid chain; its full sequence is Small ribosomal subunit protein bS20 (89 aa).

The disordered stretch occupies residues 1-28 (MTLANIKSAKKRAVQSEKSRQHNASQRS).

The protein belongs to the bacterial ribosomal protein bS20 family.

In terms of biological role, binds directly to 16S ribosomal RNA. This chain is Small ribosomal subunit protein bS20, found in Mannheimia succiniciproducens (strain KCTC 0769BP / MBEL55E).